We begin with the raw amino-acid sequence, 386 residues long: Uroporphyrinogen decarboxylase (386 aa).

Coproporphyrinogen I is bound by residues Arg-44, Ala-46, Arg-48, Arg-57, Asp-93, Tyr-170, Ser-225, and His-364. Coproporphyrinogen III is bound by residues Arg-44, Ala-46, and Arg-48. Asp-93, Tyr-170, Ser-225, and His-364 together coordinate coproporphyrinogen III.

This sequence belongs to the uroporphyrinogen decarboxylase family. As to quaternary structure, homodimer.

The protein localises to the cytoplasm. It localises to the cytosol. The enzyme catalyses uroporphyrinogen III + 4 H(+) = coproporphyrinogen III + 4 CO2. It participates in porphyrin-containing compound metabolism; protoporphyrin-IX biosynthesis; coproporphyrinogen-III from 5-aminolevulinate: step 4/4. Functionally, catalyzes the decarboxylation of four acetate groups of uroporphyrinogen-III to yield coproporphyrinogen-III. This is Uroporphyrinogen decarboxylase from Drosophila virilis (Fruit fly).